The chain runs to 165 residues: uncharacterized protein (165 aa).

The N-terminal stretch at 1-25 (MKRVLFSVIVFTAVGFTFCQSKAHA) is a signal peptide.

This is an uncharacterized protein from Bacillus subtilis (strain 168).